A 154-amino-acid polypeptide reads, in one-letter code: Protein aau3 (154 aa).

An HTH rrf2-type domain is found at 2–132; it reads RLTKQTNYAV…QGYTIDDLVK (131 aa). The [2Fe-2S] cluster site is built by Cys-91, Cys-99, and Cys-105.

Requires [2Fe-2S] cluster as cofactor.

In terms of biological role, required for growth utilizing PHB cycle intermediates. The chain is Protein aau3 (aau3) from Rhizobium meliloti (strain 1021) (Ensifer meliloti).